The chain runs to 45 residues: Large ribosomal subunit protein bL34 (45 aa).

Residues 1–20 are compositionally biased toward basic residues; the sequence is MSKRTYQPNKRKRLKTHGFR. A disordered region spans residues 1–45; that stretch reads MSKRTYQPNKRKRLKTHGFRSRMSTASGRRIISCRRRKNRETLTA.

The protein belongs to the bacterial ribosomal protein bL34 family.

The protein is Large ribosomal subunit protein bL34 of Tropheryma whipplei (strain Twist) (Whipple's bacillus).